The chain runs to 189 residues: uncharacterized protein (189 aa).

Transmembrane regions (helical) follow at residues 2-22 (LVVV…HHLL), 93-113 (ILFY…YFIL), and 116-136 (FYST…LHTL).

It is found in the membrane. This is an uncharacterized protein from Schizosaccharomyces pombe (strain 972 / ATCC 24843) (Fission yeast).